A 91-amino-acid chain; its full sequence is UPF0147 protein APE_2336a (91 aa).

Belongs to the UPF0147 family.

This is UPF0147 protein APE_2336a from Aeropyrum pernix (strain ATCC 700893 / DSM 11879 / JCM 9820 / NBRC 100138 / K1).